The sequence spans 297 residues: Probable endonuclease 4 (297 aa).

9 residues coordinate Zn(2+): His69, His110, Glu145, Asp179, His182, His214, Asp227, His229, and Glu259.

This sequence belongs to the AP endonuclease 2 family. It depends on Zn(2+) as a cofactor.

The enzyme catalyses Endonucleolytic cleavage to 5'-phosphooligonucleotide end-products.. Its function is as follows. Endonuclease IV plays a role in DNA repair. It cleaves phosphodiester bonds at apurinic or apyrimidinic (AP) sites, generating a 3'-hydroxyl group and a 5'-terminal sugar phosphate. The polypeptide is Probable endonuclease 4 (Listeria innocua serovar 6a (strain ATCC BAA-680 / CLIP 11262)).